Here is a 652-residue protein sequence, read N- to C-terminus: Coiled-coil domain-containing protein 81 (652 aa).

Position 206 is a phosphoserine (Ser206). Positions 238–256 (KCKLKDQSDKEEGTRDISS) are enriched in basic and acidic residues. Residues 238–258 (KCKLKDQSDKEEGTRDISSPK) form a disordered region. 3 positions are modified to phosphoserine: Ser275, Ser296, and Ser417. A coiled-coil region spans residues 436 to 493 (MDNRQENEIKQRQYRELMDRLEQVQLTEELAAQRAKFLKDKMEETQCYKRALDAQIKN).

The protein localises to the cytoplasm. It localises to the cytoskeleton. Its subcellular location is the microtubule organizing center. It is found in the centrosome. This Homo sapiens (Human) protein is Coiled-coil domain-containing protein 81 (CCDC81).